We begin with the raw amino-acid sequence, 131 residues long: Small ribosomal subunit protein uS8 (131 aa).

Belongs to the universal ribosomal protein uS8 family. Part of the 30S ribosomal subunit. Contacts proteins S5 and S12.

Functionally, one of the primary rRNA binding proteins, it binds directly to 16S rRNA central domain where it helps coordinate assembly of the platform of the 30S subunit. The polypeptide is Small ribosomal subunit protein uS8 (Burkholderia ambifaria (strain MC40-6)).